An 812-amino-acid chain; its full sequence is Endogenous retrovirus group K member 18 Pol protein (812 aa).

One can recognise a Reverse transcriptase domain in the interval 57–245 (LEKGHIEPSF…TPFHYLGMQI (189 aa)). The LPQG motif lies at 161 to 164 (LPQG). The short motif at 195–198 (YFDD) is the YXDD element. In terms of domain architecture, RNase H type-1 spans 460–590 (LENALTVFTD…ADLLVSSAFI (131 aa)). Residues D469, E497, D517, and D582 each contribute to the Mg(2+) site. The Integrase-type zinc-finger motif lies at 587-628 (SAFIKAQELHALTHVNAAGLKNKFDVTWKQAKDIVQHCTQCQ). 4 residues coordinate Zn(2+): H596, H600, C624, and C627. Positions 637-803 (AGVNPEVCVL…TSAEHLTGKK (167 aa)) constitute an Integrase catalytic domain.

Belongs to the beta type-B retroviral polymerase family. HERV class-II K(HML-2) pol subfamily.

It catalyses the reaction DNA(n) + a 2'-deoxyribonucleoside 5'-triphosphate = DNA(n+1) + diphosphate. It carries out the reaction Endonucleolytic cleavage to 5'-phosphomonoester.. Early post-infection, the reverse transcriptase converts the viral RNA genome into double-stranded viral DNA. The RNase H domain of the reverse transcriptase performs two functions. It degrades the RNA template and specifically removes the RNA primer from the RNA/DNA hybrid. Following nuclear import, the integrase catalyzes the insertion of the linear, double-stranded viral DNA into the host cell chromosome. Endogenous Pol proteins may have kept, lost or modified their original function during evolution. In Homo sapiens (Human), this protein is Endogenous retrovirus group K member 18 Pol protein (ERVK-18).